The sequence spans 294 residues: Sperm acrosome membrane-associated protein 1 (294 aa).

A signal peptide spans 1–29 (MSPRGTGCSAGLLMTVGWLLLAGLQSARG). The Extracellular segment spans residues 30–221 (TNVTAAVQDA…LPATDAALIF (192 aa)). Asn31 carries N-linked (GlcNAc...) asparagine glycosylation. Positions 42–70 (AHEGEGEEETENNDSETAENYAPPETEDV) are disordered. Residues 46–58 (EGEEETENNDSET) show a composition bias toward acidic residues. The helical transmembrane segment at 222-242 (VLTIGVIICVFIIFLLIFIII) threads the bilayer. The Cytoplasmic segment spans residues 243 to 294 (NWAAVKAFWGAKASTPEVQSEQSSVRYKDSTSLDQLPTEMPGEDDALSEWNE). Ser256 is modified (phosphoserine). Residues 258-267 (PEVQSEQSSV) are compositionally biased toward polar residues. Residues 258-294 (PEVQSEQSSVRYKDSTSLDQLPTEMPGEDDALSEWNE) form a disordered region. Tyr269 carries the post-translational modification Phosphotyrosine. Residues 283 to 294 (PGEDDALSEWNE) show a composition bias toward acidic residues. A Phosphoserine modification is found at Ser290.

In terms of assembly, interacts with CYLC1; the interaction may be relevant for proper acrosome attachment to the nuclear envelope. Post-translationally, N-glycosylated. As to expression, testis specific.

Its subcellular location is the cytoplasmic vesicle. The protein resides in the secretory vesicle. It is found in the acrosome inner membrane. Its function is as follows. Plays a role in acrosome formation and establishment of normal sperm morphology during spermatogenesis. Important for male fertility. The sequence is that of Sperm acrosome membrane-associated protein 1 (SPACA1) from Homo sapiens (Human).